The following is a 363-amino-acid chain: Peptide chain release factor 1 (363 aa).

Gln-237 bears the N5-methylglutamine mark. Positions 286–295 (EKRRSAEATT) are enriched in basic and acidic residues. Residues 286–305 (EKRRSAEATTRRNLVGSGDR) are disordered.

Belongs to the prokaryotic/mitochondrial release factor family. In terms of processing, methylated by PrmC. Methylation increases the termination efficiency of RF1.

The protein localises to the cytoplasm. In terms of biological role, peptide chain release factor 1 directs the termination of translation in response to the peptide chain termination codons UAG and UAA. The polypeptide is Peptide chain release factor 1 (Shewanella amazonensis (strain ATCC BAA-1098 / SB2B)).